The following is a 158-amino-acid chain: Transcription elongation factor GreA (158 aa).

The protein belongs to the GreA/GreB family.

Functionally, necessary for efficient RNA polymerase transcription elongation past template-encoded arresting sites. The arresting sites in DNA have the property of trapping a certain fraction of elongating RNA polymerases that pass through, resulting in locked ternary complexes. Cleavage of the nascent transcript by cleavage factors such as GreA or GreB allows the resumption of elongation from the new 3'terminus. GreA releases sequences of 2 to 3 nucleotides. The chain is Transcription elongation factor GreA from Ruthia magnifica subsp. Calyptogena magnifica.